The sequence spans 147 residues: SsrA-binding protein (147 aa).

Belongs to the SmpB family.

The protein resides in the cytoplasm. Required for rescue of stalled ribosomes mediated by trans-translation. Binds to transfer-messenger RNA (tmRNA), required for stable association of tmRNA with ribosomes. tmRNA and SmpB together mimic tRNA shape, replacing the anticodon stem-loop with SmpB. tmRNA is encoded by the ssrA gene; the 2 termini fold to resemble tRNA(Ala) and it encodes a 'tag peptide', a short internal open reading frame. During trans-translation Ala-aminoacylated tmRNA acts like a tRNA, entering the A-site of stalled ribosomes, displacing the stalled mRNA. The ribosome then switches to translate the ORF on the tmRNA; the nascent peptide is terminated with the 'tag peptide' encoded by the tmRNA and targeted for degradation. The ribosome is freed to recommence translation, which seems to be the essential function of trans-translation. The protein is SsrA-binding protein of Mycoplasma pneumoniae (strain ATCC 29342 / M129 / Subtype 1) (Mycoplasmoides pneumoniae).